The chain runs to 397 residues: Geranylgeranyl pyrophosphate synthase AN1592 (397 aa).

Positions 1–67 (MSPPLDSALE…SHDSSASSNI (67 aa)) are disordered. A compositionally biased stretch (basic and acidic residues) spans 13–42 (SEYKETAFPRTEKDPSQYKEHDLVTPEKEI). Low complexity predominate over residues 52–67 (SHSSHGSHDSSASSNI). Isopentenyl diphosphate is bound by residues Lys-120, Arg-123, and His-152. Positions 159 and 163 each coordinate Mg(2+). Arg-168 is a dimethylallyl diphosphate binding site. Arg-169 is an isopentenyl diphosphate binding site. Residues Lys-247, Thr-248, and Gln-281 each coordinate dimethylallyl diphosphate. Asp-284 is a Mg(2+) binding site. Dimethylallyl diphosphate is bound by residues Asn-288, Lys-298, and Lys-308.

It belongs to the FPP/GGPP synthase family. The cofactor is Mg(2+).

The catalysed reaction is isopentenyl diphosphate + dimethylallyl diphosphate = (2E)-geranyl diphosphate + diphosphate. The enzyme catalyses isopentenyl diphosphate + (2E)-geranyl diphosphate = (2E,6E)-farnesyl diphosphate + diphosphate. It carries out the reaction isopentenyl diphosphate + (2E,6E)-farnesyl diphosphate = (2E,6E,10E)-geranylgeranyl diphosphate + diphosphate. It functions in the pathway secondary metabolite biosynthesis; terpenoid biosynthesis. Geranylgeranyl pyrophosphate synthase; part of the gene cluster that mediates the biosynthesis of the diterpene ent-pimara-8(14),15-diene (PD). Within the cluster, the HMG-CoA reductase AN1593 functions in the mevalonate pathway, which produces isoprenoid precursors. The geranylgeranyl pyrophosphate (GGPP) synthase AN1592 is needed in the formation of GGPP, the precursor for diterpenes. Lastly, the pimaradiene synthase pbcA performs the 2 cyclization steps that convert GGPP to ent-pimara-8(14),15-diene. The putative roles of the remaining cluster enzymes in ent-pimara-8(14),15-diene biosynthesis is unclear. The cytochrome P450 monooxygenase AN1598, the glutathione S-transferase AN1595, the oxidoreductases AN1596 and AN1597 probably function as decorative enzymes. It is possible that in biological conditions the compound is oxidized to ent-pimara-8(14),15-dien-19-oic acid, which is a bioactive diterpene compound predominant in many plant extracts. The polypeptide is Geranylgeranyl pyrophosphate synthase AN1592 (Emericella nidulans (strain FGSC A4 / ATCC 38163 / CBS 112.46 / NRRL 194 / M139) (Aspergillus nidulans)).